The chain runs to 494 residues: Ketol-acid reductoisomerase (NADP(+)) (494 aa).

The region spanning 14–208 is the KARI N-terminal Rossmann domain; sequence LEQLGKCRFM…GGHRAGVLQS (195 aa). Residues 45-48, Arg68, Arg76, Ser78, and 108-110 contribute to the NADP(+) site; these read CGAQ and DKQ. His132 is an active-site residue. Gly158 lines the NADP(+) pocket. 2 KARI C-terminal knotted domains span residues 209-344 and 345-487; these read SFVA…NAPA and FDGA…MKDM. The Mg(2+) site is built by Asp217, Glu221, Glu389, and Glu393. Ser414 provides a ligand contact to substrate.

Belongs to the ketol-acid reductoisomerase family. The cofactor is Mg(2+).

It carries out the reaction (2R)-2,3-dihydroxy-3-methylbutanoate + NADP(+) = (2S)-2-acetolactate + NADPH + H(+). It catalyses the reaction (2R,3R)-2,3-dihydroxy-3-methylpentanoate + NADP(+) = (S)-2-ethyl-2-hydroxy-3-oxobutanoate + NADPH + H(+). Its pathway is amino-acid biosynthesis; L-isoleucine biosynthesis; L-isoleucine from 2-oxobutanoate: step 2/4. It participates in amino-acid biosynthesis; L-valine biosynthesis; L-valine from pyruvate: step 2/4. Functionally, involved in the biosynthesis of branched-chain amino acids (BCAA). Catalyzes an alkyl-migration followed by a ketol-acid reduction of (S)-2-acetolactate (S2AL) to yield (R)-2,3-dihydroxy-isovalerate. In the isomerase reaction, S2AL is rearranged via a Mg-dependent methyl migration to produce 3-hydroxy-3-methyl-2-ketobutyrate (HMKB). In the reductase reaction, this 2-ketoacid undergoes a metal-dependent reduction by NADPH to yield (R)-2,3-dihydroxy-isovalerate. This Tolumonas auensis (strain DSM 9187 / NBRC 110442 / TA 4) protein is Ketol-acid reductoisomerase (NADP(+)).